Here is a 364-residue protein sequence, read N- to C-terminus: tRNA-specific 2-thiouridylase MnmA 2 (364 aa).

Residues 10-17 (GMSGGVDS) and Met36 contribute to the ATP site. The Nucleophile role is filled by Cys106. Cys106 and Cys204 form a disulfide bridge. Gly130 contributes to the ATP binding site. The tract at residues 154 to 156 (KDQ) is interaction with tRNA. Residue Cys204 is the Cysteine persulfide intermediate of the active site. Residues 310-311 (RY) form an interaction with tRNA region.

This sequence belongs to the MnmA/TRMU family.

Its subcellular location is the cytoplasm. The enzyme catalyses S-sulfanyl-L-cysteinyl-[protein] + uridine(34) in tRNA + AH2 + ATP = 2-thiouridine(34) in tRNA + L-cysteinyl-[protein] + A + AMP + diphosphate + H(+). Catalyzes the 2-thiolation of uridine at the wobble position (U34) of tRNA, leading to the formation of s(2)U34. This Thermoanaerobacter pseudethanolicus (strain ATCC 33223 / 39E) (Clostridium thermohydrosulfuricum) protein is tRNA-specific 2-thiouridylase MnmA 2.